Consider the following 282-residue polypeptide: E3 ubiquitin-protein ligase SIAH1 (282 aa).

A compositionally biased stretch (polar residues) spans 1–17 (MSRQTATALPTGTSKCP). The segment at 1–22 (MSRQTATALPTGTSKCPPSQRV) is disordered. Phosphoserine; by ATM and ATR is present on Ser19. The RING-type zinc-finger motif lies at 41–76 (CPVCFDYVLPPILQCQSGHLVCSNCRPKLTCCPTCR). The segment at 90 to 282 (VANSVLFPCK…LGINVTISMC (193 aa)) is SBD. The SIAH-type zinc-finger motif lies at 93 to 153 (SVLFPCKYAS…VMPHLMHQHK (61 aa)). Zn(2+)-binding residues include Cys98, Cys105, His117, Cys121, Cys128, Cys135, His147, and His152.

It belongs to the SINA (Seven in absentia) family. In terms of assembly, homodimer. Component of some large E3 complex composed of UBE2D1, SIAH1, CACYBP/SIP, SKP1, APC and TBL1X. Interacts with UBE2I. Interacts with alpha-tubulin. Interacts with PEG10, which may inhibit its activity. Interacts with PEG3 and HIPK2. Interacts with group 1 glutamate receptors GRM1 and GRM5. Interacts with DAB1, which may inhibit its activity. Interacts with UBE2E2. Interacts with SNCAIP. Interacts with HIPK2; the interaction is promoted by DAZAP2 and results in SIAH1-mediated ubiquitination and subsequent proteasomal degradation of HIPK2. Interacts with DAZAP2; the interaction is decreased following phosphorylation of DAZAP2 by HIPK2. Interacts with GAPDH; leading to stabilize SIAH1. Interacts with Bassoon/BSN and Piccolo/PLCO; these interactions negatively regulate SIAH1 E3 ligase activity. Interacts with DCC. Interacts with AXIN1; catalyzes AXIN1 ubiquitination and subsequent proteasome-mediated ubiquitin-dependent degradation. Phosphorylated on Ser-19 by ATM and ATR. This phosphorylation disrupts SIAH1 interaction with HIPK2, and subsequent proteasomal degradation of HIPK2.

The protein localises to the cytoplasm. It localises to the nucleus. The enzyme catalyses S-ubiquitinyl-[E2 ubiquitin-conjugating enzyme]-L-cysteine + [acceptor protein]-L-lysine = [E2 ubiquitin-conjugating enzyme]-L-cysteine + N(6)-ubiquitinyl-[acceptor protein]-L-lysine.. Its pathway is protein modification; protein ubiquitination. In terms of biological role, E3 ubiquitin-protein ligase that mediates ubiquitination and subsequent proteasomal degradation of target proteins. E3 ubiquitin ligases accept ubiquitin from an E2 ubiquitin-conjugating enzyme in the form of a thioester and then directly transfers the ubiquitin to targeted substrates. Mediates E3 ubiquitin ligase activity either through direct binding to substrates or by functioning as the essential RING domain subunit of larger E3 complexes. Triggers the ubiquitin-mediated degradation of many substrates, including proteins involved in transcription regulation (ELL2, MYB, POU2AF1, PML and RBBP8), a cell surface receptor (DCC), cytoplasmic signal transduction molecules (KLF10/TIEG1 and NUMB), an antiapoptotic protein (BAG1), a microtubule motor protein (KIF22), a protein involved in synaptic vesicle function in neurons (SYP), a structural protein (CTNNB1) and SNCAIP. Confers constitutive instability to HIPK2 through proteasomal degradation. It is thereby involved in many cellular processes such as apoptosis, tumor suppression, cell cycle, axon guidance, transcription, spermatogenesis and TNF-alpha signaling. Has some overlapping function with SIAH2. Induces apoptosis in cooperation with PEG3. Upon nitric oxid (NO) generation that follows apoptotic stimulation, interacts with S-nitrosylated GAPDH, mediating the translocation of GAPDH to the nucleus. GAPDH acts as a stabilizer of SIAH1, facilitating the degradation of nuclear proteins. Mediates ubiquitination and degradation of EGLN2 and EGLN3 in response to the unfolded protein response (UPR), leading to their degradation and subsequent stabilization of ATF4. Also part of the Wnt signaling pathway in which it mediates the Wnt-induced ubiquitin-mediated proteasomal degradation of AXIN1. The chain is E3 ubiquitin-protein ligase SIAH1 (Siah1) from Rattus norvegicus (Rat).